Here is a 126-residue protein sequence, read N- to C-terminus: Alpha-1-purothionin (126 aa).

The first 16 residues, 1–16 (CLLILGLVLEQLQVEG), serve as a signal peptide directing secretion. 4 disulfide bridges follow: Cys-19–Cys-55, Cys-20–Cys-47, Cys-28–Cys-45, and Cys-32–Cys-41. Positions 62–126 (LALESNSDEP…DAGLPSLDAY (65 aa)) are cleaved as a propeptide — acidic domain.

Belongs to the plant thionin (TC 1.C.44) family. 4 C-C subfamily.

It localises to the secreted. Its function is as follows. Thionins are small plant proteins which are toxic to animal cells. They seem to exert their toxic effect at the level of the cell membrane. Their precise function is not known. This is Alpha-1-purothionin (THI1.1) from Triticum aestivum (Wheat).